The primary structure comprises 172 residues: Thioredoxin M5, chloroplastic (172 aa).

Residues 1 to 59 (MALETCFRAWATLHAPQPPSSGGSRDRLLLSGAGSSQSKPRLSVASPSPLRPASRFACQ) constitute a chloroplast transit peptide. The disordered stretch occupies residues 17-47 (QPPSSGGSRDRLLLSGAGSSQSKPRLSVASP). One can recognise a Thioredoxin domain in the interval 60 to 171 (CSNVVDEVVV…LATIIDKYVS (112 aa)). Active-site nucleophile residues include Cys-95 and Cys-98. A disulfide bond links Cys-95 and Cys-98.

This sequence belongs to the thioredoxin family. Plant M-type subfamily. Expressed in leaves and at lower levels in flowers.

Its subcellular location is the plastid. It localises to the chloroplast. Functionally, thiol-disulfide oxidoreductase probably involved in the redox regulation of chloroplastic enzymes. Required for chloroplast biogenesis and differentiation. Functions as an electron donor for plastidial 2-Cys peroxiredoxins and participates in hydrogen peroxide scavenging system in chloroplasts. Possesses reducing activity towards insulin disulfide bonds. The sequence is that of Thioredoxin M5, chloroplastic (TRXM) from Oryza sativa subsp. japonica (Rice).